Here is a 518-residue protein sequence, read N- to C-terminus: Adenine deaminase (518 aa).

Belongs to the metallo-dependent hydrolases superfamily. Adenine deaminase family. Mn(2+) serves as cofactor.

It catalyses the reaction adenine + H2O + H(+) = hypoxanthine + NH4(+). The chain is Adenine deaminase from Methanoculleus marisnigri (strain ATCC 35101 / DSM 1498 / JR1).